The primary structure comprises 418 residues: Gamma-glutamyl phosphate reductase (418 aa).

The protein belongs to the gamma-glutamyl phosphate reductase family.

The protein localises to the cytoplasm. The catalysed reaction is L-glutamate 5-semialdehyde + phosphate + NADP(+) = L-glutamyl 5-phosphate + NADPH + H(+). Its pathway is amino-acid biosynthesis; L-proline biosynthesis; L-glutamate 5-semialdehyde from L-glutamate: step 2/2. In terms of biological role, catalyzes the NADPH-dependent reduction of L-glutamate 5-phosphate into L-glutamate 5-semialdehyde and phosphate. The product spontaneously undergoes cyclization to form 1-pyrroline-5-carboxylate. This is Gamma-glutamyl phosphate reductase from Histophilus somni (strain 2336) (Haemophilus somnus).